The following is a 551-amino-acid chain: NAD(P)H-quinone oxidoreductase chain 4 (551 aa).

Helical transmembrane passes span 25–45, 56–76, 111–131, 133–153, 157–177, 189–209, 233–253, 264–284, 298–318, 335–355, 356–376, 397–417, 438–458, and 485–505; these read FPWL…VPFI, WFAL…YLNG, LILL…PVTF, PKLF…VFAV, LLFF…LAIW, FILY…AMGF, LLCY…VPLH, TAPV…YALM, FAPL…LTSF, MGFV…GAML, QMIS…ATYD, FALW…SGFV, IVID…LLSM, and VYII…PRLM.

It belongs to the complex I subunit 4 family.

The protein localises to the cellular thylakoid membrane. The enzyme catalyses a plastoquinone + NADH + (n+1) H(+)(in) = a plastoquinol + NAD(+) + n H(+)(out). It catalyses the reaction a plastoquinone + NADPH + (n+1) H(+)(in) = a plastoquinol + NADP(+) + n H(+)(out). Its function is as follows. NDH-1 shuttles electrons from NAD(P)H, via FMN and iron-sulfur (Fe-S) centers, to quinones in the respiratory chain. The immediate electron acceptor for the enzyme in this species is believed to be plastoquinone. Couples the redox reaction to proton translocation (for every two electrons transferred, four hydrogen ions are translocated across the cytoplasmic membrane), and thus conserves the redox energy in a proton gradient. In Synechococcus sp. (strain WH7803), this protein is NAD(P)H-quinone oxidoreductase chain 4.